Here is a 238-residue protein sequence, read N- to C-terminus: Leucine-rich repeat-containing protein 57 (238 aa).

LRR repeat units lie at residues 39 to 60 (NLRTIDLSSNKIEVVPPMMGKF), 62 to 84 (LLKSLSLNNNRISRLPDELCKLK), 85 to 106 (KLETLHLNGNQISQLPADFVQL), 108 to 129 (ALKTLNLSGNRLKTLPAQLFKL), 131 to 152 (NLDVVDLSKNRIQAIPDEVSGL), 153 to 175 (QAIELNLNQNQISQISVNISHCP), 176 to 196 (RLKVLRLEENCLELSMLPPSI), and 201 to 221 (QISLLAVEGNLFEIKKLRDLE).

In Xenopus laevis (African clawed frog), this protein is Leucine-rich repeat-containing protein 57 (lrrc57).